Consider the following 366-residue polypeptide: G kinase-anchoring protein 1 (366 aa).

Positions 1-95 are interaction with IRS1; that stretch reads MASAVLSSVP…SHAVCNAQHD (95 aa). Disordered regions lie at residues 20–110 and 147–177; these read QVDS…REEN and EYEDAENTSTQSKVMNKKDKRKNHQGKDRPL. Phosphoserine is present on residues serine 23, serine 25, and serine 27. Positions 39-50 are enriched in polar residues; the sequence is TGKSQTLGSKST. The stretch at 47–77 forms a coiled coil; that stretch reads SKSTTNEKKREKRRKKKEQQQSEANELRNLA. At serine 106 the chain carries Phosphoserine; by PKG. 2 coiled-coil regions span residues 128-160 and 243-353; these read ADLEKALLLSKLEYEEHKKEYEDAENTSTQSKV and EHNQ…YQGG.

Belongs to the GKAP1 family. As to quaternary structure, interacts with PRKG1 and IRS1.

Its subcellular location is the golgi apparatus. In terms of biological role, regulates insulin-dependent IRS1 tyrosine phosphorylation in adipocytes by modulating the availability of IRS1 to IR tyrosine kinase. Its association with IRS1 is required for insulin-induced translocation of SLC2A4 to the cell membrane. Involved in TNF-induced impairment of insulin-dependent IRS1 tyrosine phosphorylation. The polypeptide is G kinase-anchoring protein 1 (GKAP1) (Homo sapiens (Human)).